The following is a 694-amino-acid chain: Glycine--tRNA ligase beta subunit (694 aa).

The protein belongs to the class-II aminoacyl-tRNA synthetase family. In terms of assembly, tetramer of two alpha and two beta subunits.

The protein resides in the cytoplasm. It carries out the reaction tRNA(Gly) + glycine + ATP = glycyl-tRNA(Gly) + AMP + diphosphate. This Acidithiobacillus ferrooxidans (strain ATCC 23270 / DSM 14882 / CIP 104768 / NCIMB 8455) (Ferrobacillus ferrooxidans (strain ATCC 23270)) protein is Glycine--tRNA ligase beta subunit.